The primary structure comprises 440 residues: Cytochrome c biogenesis protein Ccs1 (440 aa).

3 helical membrane-spanning segments follow: residues 19–39, 78–98, and 164–184; these read LRLAIWLLASIGILIALGTFI, NIWFFGIVGFFASSLLACTYT, and VGPILVHFSILFVLFGSACGA.

It belongs to the Ccs1/CcsB family. As to quaternary structure, may interact with CcsA.

Its subcellular location is the plastid. The protein localises to the chloroplast thylakoid membrane. In terms of biological role, required during biogenesis of c-type cytochromes (cytochrome c6 and cytochrome f) at the step of heme attachment. The protein is Cytochrome c biogenesis protein Ccs1 of Emiliania huxleyi (Coccolithophore).